The following is a 993-amino-acid chain: MAAEWASRFWLWATLLIPAAAVYEDQVGKFDWRQQYVGKVKFASLEFSPGSKKLVVATEKNVIAALNSRTGEILWRHVDKGTAEGAVDAMLLHGQDVITVSNGGRIMRSWETNIGGLNWEITLDSGSFQALGLVGLQESVRYIAVLKKTTLALHHLSSGHLKWVEHLPESDSIHYQMVYSYGSGVVWALGVVPFSHVNIVKFNVEDGEIVQQVRVSTPWLQHLSGACGVVDEAVLVCPDPSSRSLQTLALETEWELRQIPLQSLDLEFGSGFQPRVLPTQPNPVDASRAQFFLHLSPSHYALLQYHYGTLSLLKNFPQTALVSFATTGEKTVAAVMACRNEVQKSSSSEDGSMGSFSEKSSSKDSLACFNQTYTINLYLVETGRRLLDTTITFSLEQSGTRPERLYIQVFLKKDDSVGYRALVQTEDHLLLFLQQLAGKVVLWSREESLAEVVCLEMVDLPLTGAQAELEGEFGKKADGLLGMFLKRLSSQLILLQAWTSHLWKMFYDARKPRSQIKNEINIDTLARDEFNLQKMMVMVTASGKLFGIESSSGTILWKQYLPNVKPDSSFKLMVQRTTAHFPHPPQCTLLVKDKESGMSSLYVFNPIFGKWSQVAPPVLKRPILQSLLLPVMDQDYAKVLLLIDDEYKVTAFPATRNVLRQLHELAPSIFFYLVDAEQGRLCGYRLRKDLTTELSWELTIPPEVQRIVKVKGKRSSEHVHSQGRVMGDRSVLYKSLNPNLLAVVTESTDAHHERTFIGIFLIDGVTGRIIHSSVQKKAKGPVHIVHSENWVVYQYWNTKARRNEFTVLELYEGTEQYNATAFSSLDRPQLPQVLQQSYIFPSSISAMEATITERGITSRHLLIGLPSGAILSLPKALLDPRRPEIPTEQSREENLIPYSPDVQIHAERFINYNQTVSRMRGIYTAPSGLESTCLVVAYGLDIYQTRVYPSKQFDVLKDDYDYVLISSVLFGLVFATMITKRLAQVKLLNRAWR.

The N-terminal stretch at 1 to 22 (MAAEWASRFWLWATLLIPAAAV) is a signal peptide. Residues 23–962 (YEDQVGKFDW…FDVLKDDYDY (940 aa)) are Lumenal-facing. Disulfide bonds link C227–C237 and C338–C368. Residues N370, N818, and N913 are each glycosylated (N-linked (GlcNAc...) asparagine). Residues 963–983 (VLISSVLFGLVFATMITKRLA) traverse the membrane as a helical segment. The Cytoplasmic segment spans residues 984–993 (QVKLLNRAWR).

The protein belongs to the EMC1 family. In terms of assembly, component of the ER membrane protein complex (EMC).

The protein localises to the endoplasmic reticulum membrane. In terms of biological role, part of the endoplasmic reticulum membrane protein complex (EMC) that enables the energy-independent insertion into endoplasmic reticulum membranes of newly synthesized membrane proteins. Preferentially accommodates proteins with transmembrane domains that are weakly hydrophobic or contain destabilizing features such as charged and aromatic residues. Involved in the cotranslational insertion of multi-pass membrane proteins in which stop-transfer membrane-anchor sequences become ER membrane spanning helices. It is also required for the post-translational insertion of tail-anchored/TA proteins in endoplasmic reticulum membranes. By mediating the proper cotranslational insertion of N-terminal transmembrane domains in an N-exo topology, with translocated N-terminus in the lumen of the ER, controls the topology of multi-pass membrane proteins like the G protein-coupled receptors. By regulating the insertion of various proteins in membranes, it is indirectly involved in many cellular processes. The sequence is that of ER membrane protein complex subunit 1 (EMC1) from Homo sapiens (Human).